We begin with the raw amino-acid sequence, 739 residues long: Disintegrin and metalloproteinase domain-containing protein 18 (739 aa).

An N-terminal signal peptide occupies residues 1-16 (MFLLLALLTELGRLQA). Residues 17–184 (HEGSEGIFLH…IKNLSKLLPQ (168 aa)) constitute a propeptide that is removed on maturation. 7 N-linked (GlcNAc...) asparagine glycosylation sites follow: N36, N76, N122, N149, N156, N177, and N294. Residues 177-687 (NLSKLLPQYL…EKGYNTHWNN (511 aa)) are Extracellular-facing. Residues 184–381 (QYLEIYIIVE…FETKCLQKLS (198 aa)) enclose the Peptidase M12B domain. Cystine bridges form between C293–C376, C335–C360, C337–C342, and C450–C471. N-linked (GlcNAc...) asparagine glycosylation is found at N359, N465, N561, N611, and N625. In terms of domain architecture, Disintegrin spans 390–479 (QPVCGNGILE…NCVPDTYALN (90 aa)). The region spanning 620 to 654 (MGYNCNATTKCKGKGICNNFGNCQCFPGHRPPDCK) is the EGF-like domain. 3 disulfides stabilise this stretch: C624–C636, C630–C642, and C644–C653. Residues 688–708 (WFILSFCIFLPFFIVFTTVIF) traverse the membrane as a helical segment. The Cytoplasmic portion of the chain corresponds to 709-739 (KRNEISKSCNRENAEYNRNSSVVSESDDVGH).

In terms of processing, the prodomain and the metalloprotease-like domain are cleaved during the epididymal maturation of the spermatozoa. Expressed specifically in testis.

It is found in the membrane. Functionally, sperm surface membrane protein that may be involved in spermatogenesis and fertilization. This is a non catalytic metalloprotease-like protein. This Homo sapiens (Human) protein is Disintegrin and metalloproteinase domain-containing protein 18 (ADAM18).